A 1099-amino-acid polypeptide reads, in one-letter code: Solute carrier family 12 member 1 (1099 aa).

Residues 1-177 (MSLNNSSNVF…EDDQAGVVKF (177 aa)) lie on the Cytoplasmic side of the membrane. Residues 20–23 (RFQV) carry the RFXV motif motif. A disordered region spans residues 31-53 (ESSAAADDNTDPPHYEETSFGDE). At serine 61 the chain carries Phosphoserine. Serine 91 is subject to Phosphoserine; by OXSR1 and STK39. Position 95 is a phosphothreonine (threonine 95). Residues threonine 100 and threonine 105 each carry the phosphothreonine; by OXSR1 and STK39 modification. Threonine 118 carries the phosphothreonine modification. Serine 120 is subject to Phosphoserine. Position 130 is a phosphoserine; by AMPK (serine 130). Serine 148 is subject to Phosphoserine. Residues 178 to 198 (GWVKGVLVRCMLNIWGVMLFI) traverse the membrane as a helical segment. The Extracellular portion of the chain corresponds to 199 to 201 (RLS). A helical membrane pass occupies residues 202 to 222 (WIVGEAGIGLGVLIILLSTMV). Topologically, residues 223 to 259 (TSITGLSTSAIATNGFVRGGGAYYLISRSLGPEFGGS) are cytoplasmic. A helical transmembrane segment spans residues 260–280 (IGLIFAFANAVAVAMYVVGFA). The Extracellular portion of the chain corresponds to 281–302 (ETVVDLLKESDSMMVDPTNDIR). Residues 303–323 (IIGSITVVILLGISVAGMEWE) traverse the membrane as a helical segment. Residues 324-327 (AKAQ) lie on the Cytoplasmic side of the membrane. The helical transmembrane segment at 328-348 (VILLVILLIAIANFFIGTVIP) threads the bilayer. The Extracellular segment spans residues 349 to 379 (SNNEKKSRGFFNYQASIFAENFGPRFTKGEG). The helical transmembrane segment at 380-400 (FFSVFAIFFPAATGILAGANI) threads the bilayer. Residues 401-417 (SGDLEDPQDAIPRGTML) are Cytoplasmic-facing. Residues 418–438 (AIFITTVAYLGVAICVGACVV) form a helical membrane-spanning segment. Topologically, residues 439–550 (RDATGNMNDT…NNEPLRGYIL (112 aa)) are extracellular. Residues asparagine 446 and asparagine 456 are each glycosylated (N-linked (GlcNAc...) asparagine). 2 consecutive transmembrane segments (helical) span residues 551–571 (TFLI…APII) and 572–592 (SNFF…ASYA). Over 593-609 (KSPGWRPAYGIYNMWVS) the chain is Extracellular. A helical transmembrane segment spans residues 610–630 (LFGAVLCCAVMFVINWWAAVI). Residues 631 to 1099 (TYVIEFFLYV…NHKNVLTFYS (469 aa)) are Cytoplasmic-facing.

The protein belongs to the SLC12A transporter family. As to quaternary structure, when phosphorylated, interacts with PPP3CB. In terms of processing, phosphorylated at Ser-91, Thr-100 and Thr-105 by OXSR1/OSR1 and STK39/SPAK downstream of WNK kinases (WNK1, WNK2, WNK3 or WNK4), promoting its activity. As to expression, kidney; localizes to the thick ascending limbs (at protein level).

It is found in the apical cell membrane. It carries out the reaction K(+)(out) + 2 chloride(out) + Na(+)(out) = K(+)(in) + 2 chloride(in) + Na(+)(in). With respect to regulation, activated following phosphorylation by OXSR1/OSR1 and STK39/SPAK downstream of WNK kinases (WNK1, WNK2, WNK3 or WNK4). Renal sodium, potassium and chloride ion cotransporter that mediates the transepithelial NaCl reabsorption in the thick ascending limb and plays an essential role in the urinary concentration and volume regulation. Electrically silent transporter system. In Homo sapiens (Human), this protein is Solute carrier family 12 member 1 (SLC12A1).